A 431-amino-acid polypeptide reads, in one-letter code: 3-phosphoshikimate 1-carboxyvinyltransferase (431 aa).

3-phosphoshikimate-binding residues include Lys21, Ser22, and Arg26. Lys21 is a phosphoenolpyruvate binding site. Positions 93 and 121 each coordinate phosphoenolpyruvate. Positions 166, 168, 192, 317, and 344 each coordinate 3-phosphoshikimate. Residue Gln168 participates in phosphoenolpyruvate binding. Asp317 (proton acceptor) is an active-site residue. The phosphoenolpyruvate site is built by Arg348 and Arg390.

Belongs to the EPSP synthase family. As to quaternary structure, monomer.

The protein localises to the cytoplasm. It catalyses the reaction 3-phosphoshikimate + phosphoenolpyruvate = 5-O-(1-carboxyvinyl)-3-phosphoshikimate + phosphate. It participates in metabolic intermediate biosynthesis; chorismate biosynthesis; chorismate from D-erythrose 4-phosphate and phosphoenolpyruvate: step 6/7. Catalyzes the transfer of the enolpyruvyl moiety of phosphoenolpyruvate (PEP) to the 5-hydroxyl of shikimate-3-phosphate (S3P) to produce enolpyruvyl shikimate-3-phosphate and inorganic phosphate. This is 3-phosphoshikimate 1-carboxyvinyltransferase from Herpetosiphon aurantiacus (strain ATCC 23779 / DSM 785 / 114-95).